A 267-amino-acid polypeptide reads, in one-letter code: 2-keto-3-deoxy-L-rhamnonate aldolase (267 aa).

The active-site Proton acceptor is H49. Q151 is a substrate binding site. E153 serves as a coordination point for Mg(2+). 2 residues coordinate substrate: A178 and D179. Residue D179 coordinates Mg(2+).

Belongs to the HpcH/HpaI aldolase family. KDR aldolase subfamily. In terms of assembly, homohexamer. It depends on Mg(2+) as a cofactor.

It catalyses the reaction 2-dehydro-3-deoxy-L-rhamnonate = (S)-lactaldehyde + pyruvate. Functionally, catalyzes the reversible retro-aldol cleavage of 2-keto-3-deoxy-L-rhamnonate (KDR) to pyruvate and lactaldehyde. In Escherichia coli (strain UTI89 / UPEC), this protein is 2-keto-3-deoxy-L-rhamnonate aldolase.